We begin with the raw amino-acid sequence, 61 residues long: Sperm protamine P1 (61 aa).

The tract at residues 1 to 61 is disordered; sequence MARYRHSRSR…RRYSRRRRRY (61 aa).

The protein belongs to the protamine P1 family. Testis.

Its subcellular location is the nucleus. The protein localises to the chromosome. Functionally, protamines substitute for histones in the chromatin of sperm during the haploid phase of spermatogenesis. They compact sperm DNA into a highly condensed, stable and inactive complex. This chain is Sperm protamine P1 (PRM1), found in Potorous longipes (Long-footed potoroo).